The following is a 397-amino-acid chain: Phosphoglycerate kinase (397 aa).

Substrate-binding positions include Asp21–Asn23, Arg36, His59–Arg62, Arg118, and Arg151. ATP is bound by residues Lys201, Glu323, and Gly353 to Thr356.

This sequence belongs to the phosphoglycerate kinase family. Monomer.

Its subcellular location is the cytoplasm. The enzyme catalyses (2R)-3-phosphoglycerate + ATP = (2R)-3-phospho-glyceroyl phosphate + ADP. The protein operates within carbohydrate degradation; glycolysis; pyruvate from D-glyceraldehyde 3-phosphate: step 2/5. In Bartonella quintana (strain Toulouse) (Rochalimaea quintana), this protein is Phosphoglycerate kinase.